Here is a 100-residue protein sequence, read N- to C-terminus: Small ribosomal subunit protein bS18c (100 aa).

It belongs to the bacterial ribosomal protein bS18 family. In terms of assembly, part of the 30S ribosomal subunit.

Its subcellular location is the plastid. It is found in the chloroplast. In Pleurastrum terricola (Filamentous green alga), this protein is Small ribosomal subunit protein bS18c.